A 229-amino-acid chain; its full sequence is Non-structural protein P8 (229 aa).

Basic and acidic residues predominate over residues 13-31; that stretch reads KMKHNQDRVEEPSQVRVDD. A disordered region spans residues 13–46; the sequence is KMKHNQDRVEEPSQVRVDDTISQPPRYAPSAPMP. Low complexity predominate over residues 36-46; the sequence is PPRYAPSAPMP. 2 helical membrane-spanning segments follow: residues 119–139 and 162–182; these read IIHT…VCTL and SLNP…MVCA.

Belongs to the orbivirus NS3 family. In terms of assembly, forms homooligomers via coiled-coil motif. Interacts with host OPTN; this interaction inhibits innate immune response.

The protein resides in the host cell membrane. The protein localises to the host Golgi apparatus. Plays a role in the inhibition of host innate immune response. Interacts with host OPTN and thus inhibits the recruitment of TBK1 to the host Golgi apparatus. In turn, downstream partner IRF3 cannot be activated and IFN-beta production is impaired. Its function is as follows. Facilitates viral particle release either by increasing plasma membrane permeability through a viroporin-like activity or by viral budding. The chain is Non-structural protein P8 (Segment-10) from Antilocapra americana (Pronghorn).